Here is a 321-residue protein sequence, read N- to C-terminus: Methionyl-tRNA formyltransferase (321 aa).

112–115 (GLLP) contacts (6S)-5,6,7,8-tetrahydrofolate.

This sequence belongs to the Fmt family.

The enzyme catalyses L-methionyl-tRNA(fMet) + (6R)-10-formyltetrahydrofolate = N-formyl-L-methionyl-tRNA(fMet) + (6S)-5,6,7,8-tetrahydrofolate + H(+). Attaches a formyl group to the free amino group of methionyl-tRNA(fMet). The formyl group appears to play a dual role in the initiator identity of N-formylmethionyl-tRNA by promoting its recognition by IF2 and preventing the misappropriation of this tRNA by the elongation apparatus. The chain is Methionyl-tRNA formyltransferase from Chlamydia caviae (strain ATCC VR-813 / DSM 19441 / 03DC25 / GPIC) (Chlamydophila caviae).